Reading from the N-terminus, the 365-residue chain is Chorismate synthase (365 aa).

NADP(+) contacts are provided by R48 and R54. FMN is bound by residues 131-133 (RSS), 243-244 (NA), G288, 303-307 (KPTSS), and R329.

This sequence belongs to the chorismate synthase family. As to quaternary structure, homotetramer. Requires FMNH2 as cofactor.

It catalyses the reaction 5-O-(1-carboxyvinyl)-3-phosphoshikimate = chorismate + phosphate. It participates in metabolic intermediate biosynthesis; chorismate biosynthesis; chorismate from D-erythrose 4-phosphate and phosphoenolpyruvate: step 7/7. Functionally, catalyzes the anti-1,4-elimination of the C-3 phosphate and the C-6 proR hydrogen from 5-enolpyruvylshikimate-3-phosphate (EPSP) to yield chorismate, which is the branch point compound that serves as the starting substrate for the three terminal pathways of aromatic amino acid biosynthesis. This reaction introduces a second double bond into the aromatic ring system. The chain is Chorismate synthase from Rhizobium etli (strain CIAT 652).